Reading from the N-terminus, the 232-residue chain is 6-phosphogluconolactonase (232 aa).

It belongs to the glucosamine/galactosamine-6-phosphate isomerase family. 6-phosphogluconolactonase subfamily.

The enzyme catalyses 6-phospho-D-glucono-1,5-lactone + H2O = 6-phospho-D-gluconate + H(+). The protein operates within carbohydrate degradation; pentose phosphate pathway; D-ribulose 5-phosphate from D-glucose 6-phosphate (oxidative stage): step 2/3. Functionally, hydrolysis of 6-phosphogluconolactone to 6-phosphogluconate. This is 6-phosphogluconolactonase (pgl) from Haemophilus influenzae (strain ATCC 51907 / DSM 11121 / KW20 / Rd).